Reading from the N-terminus, the 214-residue chain is Leucyl/phenylalanyl-tRNA--protein transferase (214 aa).

The protein belongs to the L/F-transferase family.

It is found in the cytoplasm. It catalyses the reaction N-terminal L-lysyl-[protein] + L-leucyl-tRNA(Leu) = N-terminal L-leucyl-L-lysyl-[protein] + tRNA(Leu) + H(+). It carries out the reaction N-terminal L-arginyl-[protein] + L-leucyl-tRNA(Leu) = N-terminal L-leucyl-L-arginyl-[protein] + tRNA(Leu) + H(+). The enzyme catalyses L-phenylalanyl-tRNA(Phe) + an N-terminal L-alpha-aminoacyl-[protein] = an N-terminal L-phenylalanyl-L-alpha-aminoacyl-[protein] + tRNA(Phe). Functions in the N-end rule pathway of protein degradation where it conjugates Leu, Phe and, less efficiently, Met from aminoacyl-tRNAs to the N-termini of proteins containing an N-terminal arginine or lysine. The protein is Leucyl/phenylalanyl-tRNA--protein transferase of Cereibacter sphaeroides (strain ATCC 17023 / DSM 158 / JCM 6121 / CCUG 31486 / LMG 2827 / NBRC 12203 / NCIMB 8253 / ATH 2.4.1.) (Rhodobacter sphaeroides).